Here is a 336-residue protein sequence, read N- to C-terminus: Fructose-1,6-bisphosphatase class 1 (336 aa).

Mg(2+) contacts are provided by Glu90, Asp112, Leu114, and Asp115. Substrate is bound by residues 115 to 118 (DGSS), Asn211, and Lys277. Glu283 is a Mg(2+) binding site.

Belongs to the FBPase class 1 family. As to quaternary structure, homotetramer. Mg(2+) serves as cofactor.

The protein resides in the cytoplasm. The enzyme catalyses beta-D-fructose 1,6-bisphosphate + H2O = beta-D-fructose 6-phosphate + phosphate. It participates in carbohydrate biosynthesis; gluconeogenesis. This is Fructose-1,6-bisphosphatase class 1 from Stutzerimonas stutzeri (strain A1501) (Pseudomonas stutzeri).